The following is a 367-amino-acid chain: Alanine racemase (367 aa).

Lysine 40 serves as the catalytic Proton acceptor; specific for D-alanine. At lysine 40 the chain carries N6-(pyridoxal phosphate)lysine. Arginine 136 serves as a coordination point for substrate. The active-site Proton acceptor; specific for L-alanine is the tyrosine 263. Position 310 (methionine 310) interacts with substrate.

Belongs to the alanine racemase family. Pyridoxal 5'-phosphate serves as cofactor.

It carries out the reaction L-alanine = D-alanine. The protein operates within amino-acid biosynthesis; D-alanine biosynthesis; D-alanine from L-alanine: step 1/1. Its function is as follows. Catalyzes the interconversion of L-alanine and D-alanine. May also act on other amino acids. This chain is Alanine racemase (alr), found in Streptococcus pneumoniae (strain Taiwan19F-14).